We begin with the raw amino-acid sequence, 146 residues long: Small ribosomal subunit protein bS6 (146 aa).

The segment at 106–146 (QAAATQRAAERRAQREAERNAAQAQSSASNQARTAATTSGK) is disordered. Residues 113–124 (AAERRAQREAER) are compositionally biased toward basic and acidic residues. Low complexity predominate over residues 125–146 (NAAQAQSSASNQARTAATTSGK).

The protein belongs to the bacterial ribosomal protein bS6 family.

Binds together with bS18 to 16S ribosomal RNA. The polypeptide is Small ribosomal subunit protein bS6 (Oenococcus oeni (strain ATCC BAA-331 / PSU-1)).